We begin with the raw amino-acid sequence, 188 residues long: ATP synthase subunit delta (188 aa).

This sequence belongs to the ATPase delta chain family. As to quaternary structure, F-type ATPases have 2 components, F(1) - the catalytic core - and F(0) - the membrane proton channel. F(1) has five subunits: alpha(3), beta(3), gamma(1), delta(1), epsilon(1). F(0) has three main subunits: a(1), b(2) and c(10-14). The alpha and beta chains form an alternating ring which encloses part of the gamma chain. F(1) is attached to F(0) by a central stalk formed by the gamma and epsilon chains, while a peripheral stalk is formed by the delta and b chains.

The protein localises to the cell inner membrane. F(1)F(0) ATP synthase produces ATP from ADP in the presence of a proton or sodium gradient. F-type ATPases consist of two structural domains, F(1) containing the extramembraneous catalytic core and F(0) containing the membrane proton channel, linked together by a central stalk and a peripheral stalk. During catalysis, ATP synthesis in the catalytic domain of F(1) is coupled via a rotary mechanism of the central stalk subunits to proton translocation. Its function is as follows. This protein is part of the stalk that links CF(0) to CF(1). It either transmits conformational changes from CF(0) to CF(1) or is implicated in proton conduction. The polypeptide is ATP synthase subunit delta (Rhizobium rhizogenes (strain K84 / ATCC BAA-868) (Agrobacterium radiobacter)).